We begin with the raw amino-acid sequence, 336 residues long: Corrinoid adenosyltransferase PduO (336 aa).

The pduON stretch occupies residues 1–185; it reads MAIYTRTGDA…IIREVSKRYL (185 aa). The pduOC stretch occupies residues 194–336; the sequence is KETTPVALSF…IAAINVGTHQ (143 aa). H207 contributes to the heme binding site. The Mg(2+) site is built by E215 and Q218.

This sequence belongs to the Cob(I)alamin adenosyltransferase family. PduO subfamily. In terms of assembly, the C-terminal domain (PduOC) forms stable octamers and also crystallizes as an octamer. Forms a complex with PduS. Requires heme b as cofactor. It depends on Mg(2+) as a cofactor.

The protein localises to the bacterial microcompartment. It carries out the reaction cob(I)alamin-[corrinoid adenosyltransferase] + ATP = apo-[corrinoid adenosyltransferase] + adenosylcob(III)alamin + triphosphate. The protein operates within polyol metabolism; 1,2-propanediol degradation. It participates in cofactor biosynthesis; adenosylcobalamin biosynthesis. With respect to regulation, inhibited by ADP but not significantly by other nucleotides, inhibited by diphosphate and less well by triphosphate. Converts cob(I)alamin to adenosylcobalamin (adenosylcob(III)alamin), the cofactor for propanediol dehydratase. Found in the bacterial microcompartment (BMC) dedicated to 1,2-propanediol (1,2-PD) degradation. For adenosylcobalamin synthesis dATP can replace ATP, but no other nucleotides will substitute. PduS and PduO allow regeneration of the adenosylcobalamin cofactor within the BMC. In terms of biological role, the 1,2-PD-specific bacterial microcompartment (BMC) concentrates low levels of 1,2-PD catabolic enzymes, concentrates volatile reaction intermediates thus enhancing pathway flux and keeps the level of toxic, mutagenic propionaldehyde low. The protein is Corrinoid adenosyltransferase PduO of Salmonella typhimurium (strain LT2 / SGSC1412 / ATCC 700720).